The chain runs to 210 residues: FMN-dependent NADH:quinone oxidoreductase 9 (210 aa).

Residues serine 10 and serine 16–serine 18 contribute to the FMN site.

Belongs to the azoreductase type 1 family. As to quaternary structure, homodimer. FMN is required as a cofactor.

The catalysed reaction is 2 a quinone + NADH + H(+) = 2 a 1,4-benzosemiquinone + NAD(+). It carries out the reaction N,N-dimethyl-1,4-phenylenediamine + anthranilate + 2 NAD(+) = 2-(4-dimethylaminophenyl)diazenylbenzoate + 2 NADH + 2 H(+). Quinone reductase that provides resistance to thiol-specific stress caused by electrophilic quinones. Its function is as follows. Also exhibits azoreductase activity. Catalyzes the reductive cleavage of the azo bond in aromatic azo compounds to the corresponding amines. The protein is FMN-dependent NADH:quinone oxidoreductase 9 of Burkholderia lata (strain ATCC 17760 / DSM 23089 / LMG 22485 / NCIMB 9086 / R18194 / 383).